We begin with the raw amino-acid sequence, 3587 residues long: Tyrocidine synthase 2 (3587 aa).

Positions 466–1045 (AATMHELFSR…IQALAAYVEG (580 aa)) are domain 1 (Proline-activating). 2 Carrier domains span residues 972–1047 (APTT…EGGE) and 2007–2082 (APAT…EHSE). An O-(pantetheine 4'-phosphoryl)serine mark is found at Ser1007 and Ser2042. The tract at residues 1522 to 2081 (EQTAVVFGDK…RDLARLIEHS (560 aa)) is domain 2 (Phenylalanine-activating). A domain 3 (D-phenylalanine-activating) region spans residues 2540–3122 (YRADQTIQQL…NSRESEQGVV (583 aa)). Positions 3017–3040 (NDKIDRKALPKPNQEENRTEQYAA) are disordered. Residues 3018 to 3035 (DKIDRKALPKPNQEENRT) show a composition bias toward basic and acidic residues. Residues 3040–3114 (APQTELEQLL…EAALRVIPNS (75 aa)) enclose the Carrier 3 domain. Ser3075 bears the O-(pantetheine 4'-phosphoryl)serine mark.

This sequence belongs to the ATP-dependent AMP-binding enzyme family. As to quaternary structure, large multienzyme complex of TycA, TycB and TycC. It depends on pantetheine 4'-phosphate as a cofactor.

The catalysed reaction is L-phenylalanine + ATP + H2O = D-phenylalanine + AMP + diphosphate + H(+). It participates in antibiotic biosynthesis; tyrocidine biosynthesis. Its function is as follows. Activates the second to fourth amino acids in tyrocidine (in tyrocidine A, Pro, Phe, and D-Phe) and epimerizes the last one. This is Tyrocidine synthase 2 (tycB) from Brevibacillus parabrevis.